Here is a 175-residue protein sequence, read N- to C-terminus: Cytochrome c homolog (175 aa).

The Cytoplasmic portion of the chain corresponds to Met1–Lys8. The helical; Signal-anchor transmembrane segment at Ile9 to Ile29 threads the bilayer. Residues Leu30–Lys175 are Periplasmic-facing. Residues Cys84, Cys87, His88, and Met150 each contribute to the heme c site.

Belongs to the cytochrome c family. Post-translationally, binds 1 heme c group covalently per subunit.

Its subcellular location is the cell membrane. In terms of biological role, may be involved in electron transfer from bc1 complex to aa3. The polypeptide is Cytochrome c homolog (cycM) (Rickettsia felis (strain ATCC VR-1525 / URRWXCal2) (Rickettsia azadi)).